A 360-amino-acid chain; its full sequence is Aminomethyltransferase (360 aa).

It belongs to the GcvT family. The glycine cleavage system is composed of four proteins: P, T, L and H.

It carries out the reaction N(6)-[(R)-S(8)-aminomethyldihydrolipoyl]-L-lysyl-[protein] + (6S)-5,6,7,8-tetrahydrofolate = N(6)-[(R)-dihydrolipoyl]-L-lysyl-[protein] + (6R)-5,10-methylene-5,6,7,8-tetrahydrofolate + NH4(+). Functionally, the glycine cleavage system catalyzes the degradation of glycine. This chain is Aminomethyltransferase, found in Pseudomonas putida (strain ATCC 47054 / DSM 6125 / CFBP 8728 / NCIMB 11950 / KT2440).